A 224-amino-acid chain; its full sequence is Putative adhesin A1E_05320 (224 aa).

The first 22 residues, 1-22 (MKKLLLIAATSATMLSSTLSFA), serve as a signal peptide directing secretion.

The protein is Putative adhesin A1E_05320 of Rickettsia canadensis (strain McKiel).